Consider the following 187-residue polypeptide: Putative protein 2 (187 aa).

Helical transmembrane passes span 10–27 (MLAA…NVGV) and 99–121 (VTII…LLLV).

It belongs to the TMEM9 family.

It is found in the membrane. In Takifugu rubripes (Japanese pufferfish), this protein is Putative protein 2.